The following is a 213-amino-acid chain: MTDKPHQCVIIGIAGASASGKSLIASTLYRELRDQVGDEHIGVIPEDSYYKDQTHLTMEERVKTNYDHPSAMDHNLLFQHLQMLKSGKAIELPLYSYTEHTRKKETIHLEPKKVIILEGILLLTDIRLRQEMNFSIFVDTPLDICLMRRMKRDVNERGRSMDSVMAQYQKTVRPMFLQFIDPSKQYADIIVPRGGKNRIAIDILKAKISQFFE.

15–22 (GASASGKS) contributes to the ATP binding site.

Belongs to the uridine kinase family.

The protein resides in the cytoplasm. The enzyme catalyses uridine + ATP = UMP + ADP + H(+). The catalysed reaction is cytidine + ATP = CMP + ADP + H(+). The protein operates within pyrimidine metabolism; CTP biosynthesis via salvage pathway; CTP from cytidine: step 1/3. It participates in pyrimidine metabolism; UMP biosynthesis via salvage pathway; UMP from uridine: step 1/1. This is Uridine kinase from Serratia proteamaculans (strain 568).